A 589-amino-acid chain; its full sequence is Probable cytochrome P450 49a1 (589 aa).

The segment at 56–90 is disordered; sequence TGESSNPKKLNVSQQPVTSVATTRTTASSLPAETT. Over residues 57 to 71 the composition is skewed to polar residues; that stretch reads GESSNPKKLNVSQQP. The span at 72–84 shows a compositional bias: low complexity; sequence VTSVATTRTTASS. Position 536 (C536) interacts with heme.

Belongs to the cytochrome P450 family. It depends on heme as a cofactor.

The protein localises to the endoplasmic reticulum membrane. The protein resides in the microsome membrane. Functionally, may be involved in the metabolism of insect hormones and in the breakdown of synthetic insecticides. In Drosophila melanogaster (Fruit fly), this protein is Probable cytochrome P450 49a1 (Cyp49a1).